Reading from the N-terminus, the 312-residue chain is Ornithine carbamoyltransferase (312 aa).

Residues 57–60 (STRT), glutamine 84, arginine 108, and 135–138 (HPCQ) contribute to the carbamoyl phosphate site. L-ornithine contacts are provided by residues asparagine 166, aspartate 226, and 230 to 231 (SM). Carbamoyl phosphate is bound by residues 265–266 (CL) and arginine 293.

This sequence belongs to the aspartate/ornithine carbamoyltransferase superfamily. OTCase family.

It localises to the cytoplasm. It carries out the reaction carbamoyl phosphate + L-ornithine = L-citrulline + phosphate + H(+). It functions in the pathway amino-acid degradation; L-arginine degradation via ADI pathway; carbamoyl phosphate from L-arginine: step 2/2. Functionally, reversibly catalyzes the transfer of the carbamoyl group from carbamoyl phosphate (CP) to the N(epsilon) atom of ornithine (ORN) to produce L-citrulline. This chain is Ornithine carbamoyltransferase, found in Brucella abortus (strain 2308).